A 431-amino-acid chain; its full sequence is Urokinase-type plasminogen activator (431 aa).

Residues 1-20 form the signal peptide; it reads MRALLARLLLCVLVVSDSKG. Residues 27–63 form the EGF-like domain; it reads VPSNCDCLNGGTCVSNKYFSNIHWCNCPKKFGGQHCE. 6 cysteine pairs are disulfide-bonded: Cys-31–Cys-39, Cys-33–Cys-51, Cys-53–Cys-62, Cys-70–Cys-151, Cys-91–Cys-133, and Cys-122–Cys-146. The segment at 34–57 is binds urokinase plasminogen activator surface receptor; sequence LNGGTCVSNKYFSNIHWCNCPKKF. Thr-38 carries O-linked (Fuc) threonine glycosylation. Positions 70–151 constitute a Kringle domain; sequence CYEGNGHFYR…LVQECMVHDC (82 aa). The connecting peptide stretch occupies residues 152 to 177; the sequence is ADGKKPSSPPEELKFQCGQKTLRPRF. Ser-158 carries the post-translational modification Phosphoserine. 6 disulfides stabilise this stretch: Cys-168/Cys-299, Cys-209/Cys-225, Cys-217/Cys-288, Cys-313/Cys-382, Cys-345/Cys-361, and Cys-372/Cys-400. A Peptidase S1 domain is found at 179–424; sequence IIGGEFTTIE…FLPWIRSHTK (246 aa). Residues His-224 and Asp-275 each act as charge relay system in the active site. Asn-322 carries an N-linked (GlcNAc...) asparagine glycan. A Phosphoserine modification is found at Ser-323. Ser-376 (charge relay system) is an active-site residue.

It belongs to the peptidase S1 family. As to quaternary structure, found in high and low molecular mass forms. Each consists of two chains, A and B. The high molecular mass form contains a long chain A which is cleaved to yield a short chain A. Forms heterodimer with SERPINA5. Binds LRP1B; binding is followed by internalization and degradation. Interacts with MRC2. Interacts with PLAUR. In complex with SERPINE1, interacts with PLAUR/uPAR. Interacts with SORL1 and LRP1, either alone or in complex with SERPINE1; these interactions are abolished in the presence of LRPAP1/RAP. The ternary complex composed of PLAUR-PLAU-PAI1 also interacts with SORLA. Phosphorylation of Ser-158 and Ser-323 abolishes proadhesive ability but does not interfere with receptor binding. Post-translationally, produced as an inactive single-chain protein (pro-uPA or sc-uPA), is processed into the active disulfide-linked two-chain form of PLAU/uPA by a proteolytic event mediated, at least, by TMPRSS4. As to expression, expressed in the prostate gland and prostate cancers.

It is found in the secreted. It carries out the reaction Specific cleavage of Arg-|-Val bond in plasminogen to form plasmin.. Its activity is regulated as follows. Inhibited by SERPINA5. Inhibited by SERPINE1. In terms of biological role, specifically cleaves the zymogen plasminogen to form the active enzyme plasmin. The sequence is that of Urokinase-type plasminogen activator from Homo sapiens (Human).